A 743-amino-acid chain; its full sequence is Threonine synthase-like 1 (743 aa).

Residue Lys-281 is modified to N6-acetyllysine. Lys-351 is subject to N6-(pyridoxal phosphate)lysine.

This sequence belongs to the threonine synthase family. The cofactor is pyridoxal 5'-phosphate.

The chain is Threonine synthase-like 1 (THNSL1) from Pongo abelii (Sumatran orangutan).